Consider the following 186-residue polypeptide: Ribosome-recycling factor (186 aa).

It belongs to the RRF family.

Its subcellular location is the cytoplasm. Responsible for the release of ribosomes from messenger RNA at the termination of protein biosynthesis. May increase the efficiency of translation by recycling ribosomes from one round of translation to another. This chain is Ribosome-recycling factor, found in Burkholderia thailandensis (strain ATCC 700388 / DSM 13276 / CCUG 48851 / CIP 106301 / E264).